A 359-amino-acid polypeptide reads, in one-letter code: 3-dehydroquinate synthase (359 aa).

NAD(+)-binding positions include 72-77 (DGEHYK), 106-110 (GVIGD), 130-131 (TT), K143, and K152. Residues E185, H248, and H265 each coordinate Zn(2+).

The protein belongs to the sugar phosphate cyclases superfamily. Dehydroquinate synthase family. The cofactor is Co(2+). Requires Zn(2+) as cofactor. NAD(+) is required as a cofactor.

It is found in the cytoplasm. It catalyses the reaction 7-phospho-2-dehydro-3-deoxy-D-arabino-heptonate = 3-dehydroquinate + phosphate. It functions in the pathway metabolic intermediate biosynthesis; chorismate biosynthesis; chorismate from D-erythrose 4-phosphate and phosphoenolpyruvate: step 2/7. Functionally, catalyzes the conversion of 3-deoxy-D-arabino-heptulosonate 7-phosphate (DAHP) to dehydroquinate (DHQ). The sequence is that of 3-dehydroquinate synthase from Thermodesulfovibrio yellowstonii (strain ATCC 51303 / DSM 11347 / YP87).